The sequence spans 152 residues: Aspartate 1-decarboxylase (152 aa).

The active-site Schiff-base intermediate with substrate; via pyruvic acid is Ser24. Ser24 bears the Pyruvic acid (Ser) mark. Thr56 lines the substrate pocket. The active-site Proton donor is Tyr57. 72-74 (GAA) contacts substrate.

Belongs to the PanD family. As to quaternary structure, heterooctamer of four alpha and four beta subunits. The cofactor is pyruvate. In terms of processing, is synthesized initially as an inactive proenzyme, which is activated by self-cleavage at a specific serine bond to produce a beta-subunit with a hydroxyl group at its C-terminus and an alpha-subunit with a pyruvoyl group at its N-terminus.

It is found in the cytoplasm. It carries out the reaction L-aspartate + H(+) = beta-alanine + CO2. It participates in cofactor biosynthesis; (R)-pantothenate biosynthesis; beta-alanine from L-aspartate: step 1/1. Functionally, catalyzes the pyruvoyl-dependent decarboxylation of aspartate to produce beta-alanine. This is Aspartate 1-decarboxylase from Rhodospirillum centenum (strain ATCC 51521 / SW).